Reading from the N-terminus, the 465-residue chain is Glutamate--tRNA ligase (465 aa).

Positions 11-21 (PSPTGFIHLGN) match the 'HIGH' region motif. Positions 118-139 (GEKPRYDGTWRPAPGKILPPPP) are disordered. A 'KMSKS' region motif is present at residues 243-247 (KMSKR). Lys-246 contributes to the ATP binding site.

Belongs to the class-I aminoacyl-tRNA synthetase family. Glutamate--tRNA ligase type 1 subfamily. In terms of assembly, monomer.

Its subcellular location is the cytoplasm. It catalyses the reaction tRNA(Glu) + L-glutamate + ATP = L-glutamyl-tRNA(Glu) + AMP + diphosphate. In terms of biological role, catalyzes the attachment of glutamate to tRNA(Glu) in a two-step reaction: glutamate is first activated by ATP to form Glu-AMP and then transferred to the acceptor end of tRNA(Glu). This Ralstonia pickettii (strain 12J) protein is Glutamate--tRNA ligase.